The sequence spans 656 residues: Mucin-20 (656 aa).

An N-terminal signal peptide occupies residues 1–21 (MGSVWGLAVPLLVFCWKVGVS). Composition is skewed to polar residues over residues 85 to 96 (ATSISSEVNSRD), 114 to 125 (PAASSLEAQTTS), and 159 to 170 (TTSPAPSFLDTQ). 3 disordered regions span residues 85-125 (ATSI…QTTS), 159-232 (TTSP…TQTI), and 329-348 (YLSS…LSSS). Residues 171 to 227 (TTSPEPSSLTTSPAPSSLITSPTPSSLTTSPAPSFLDTQTTSPAPSSLTTSPAPSSL) are compositionally biased toward low complexity. Repeat copies occupy residues 180–188 (TTSPAPSSL), 189–197 (ITSPTPSSL), 198–206 (TTSPAPSFL), 210–218 (TTSPAPSSL), and 219–227 (TTSPAPSSL). The segment at 180–227 (TTSPAPSSLITSPTPSSLTTSPAPSFLDTQTTSPAPSSLTTSPAPSSL) is approximate repeats. Residues Asn366 and Asn570 are each glycosylated (N-linked (GlcNAc...) asparagine). The interval 399-603 (TAALFTSEIL…WIRKTTKHDP (205 aa)) is involved in oligomerization. Residues 560–573 (STTASTSKNPNITL) show a composition bias toward polar residues. A disordered region spans residues 560 to 592 (STTASTSKNPNITLTKTTASPKPPTHPTTSAST). Residues 604-656 (GEDGGFLLVRLTVASPKDLTEHNAREKLMNQLRRELHARMPLVHMSFLSIRRG) are interaction with MET.

In terms of assembly, interacts with MET; oligomerization increases affinity for MET. As to expression, highly expressed in kidney. Up-regulated in renal tissues during renal injury.

Its subcellular location is the secreted. It localises to the apical cell membrane. The protein resides in the basolateral cell membrane. The protein localises to the cell projection. It is found in the microvillus membrane. Functionally, may regulate MET signaling cascade. Seems to decrease hepatocyte growth factor (HGF)-induced transient MAPK activation. Blocks GRB2 recruitment to MET thus suppressing the GRB2-RAS pathway. Inhibits HGF-induced proliferation of MMP1 and MMP9 expression. The protein is Mucin-20 (Muc20) of Mus musculus (Mouse).